We begin with the raw amino-acid sequence, 422 residues long: 3-phosphoshikimate 1-carboxyvinyltransferase (422 aa).

Lys24, Ser25, and Arg29 together coordinate 3-phosphoshikimate. Lys24 is a binding site for phosphoenolpyruvate. Residues Gly93 and Arg121 each coordinate phosphoenolpyruvate. Residues Ser164, Ser165, Gln166, Glu308, and His335 each contribute to the 3-phosphoshikimate site. Gln166 serves as a coordination point for phosphoenolpyruvate. Residue Glu308 is the Proton acceptor of the active site. Phosphoenolpyruvate contacts are provided by Arg339, Arg380, and Lys405.

This sequence belongs to the EPSP synthase family. Monomer.

The protein localises to the cytoplasm. The catalysed reaction is 3-phosphoshikimate + phosphoenolpyruvate = 5-O-(1-carboxyvinyl)-3-phosphoshikimate + phosphate. It participates in metabolic intermediate biosynthesis; chorismate biosynthesis; chorismate from D-erythrose 4-phosphate and phosphoenolpyruvate: step 6/7. In terms of biological role, catalyzes the transfer of the enolpyruvyl moiety of phosphoenolpyruvate (PEP) to the 5-hydroxyl of shikimate-3-phosphate (S3P) to produce enolpyruvyl shikimate-3-phosphate and inorganic phosphate. The sequence is that of 3-phosphoshikimate 1-carboxyvinyltransferase from Saccharopolyspora erythraea (strain ATCC 11635 / DSM 40517 / JCM 4748 / NBRC 13426 / NCIMB 8594 / NRRL 2338).